The primary structure comprises 274 residues: Large ribosomal subunit protein uL2 (274 aa).

The tract at residues 224-274 (AMNPVDHPHGGGEGRTGEGQVPVSPWNTMTKGYRTRSNKRTQTFIVSRRKK) is disordered. Basic and acidic residues predominate over residues 229-239 (DHPHGGGEGRT).

Belongs to the universal ribosomal protein uL2 family. As to quaternary structure, part of the 50S ribosomal subunit. Forms a bridge to the 30S subunit in the 70S ribosome.

Its function is as follows. One of the primary rRNA binding proteins. Required for association of the 30S and 50S subunits to form the 70S ribosome, for tRNA binding and peptide bond formation. It has been suggested to have peptidyltransferase activity; this is somewhat controversial. Makes several contacts with the 16S rRNA in the 70S ribosome. The chain is Large ribosomal subunit protein uL2 from Methylibium petroleiphilum (strain ATCC BAA-1232 / LMG 22953 / PM1).